Consider the following 372-residue polypeptide: Flap endonuclease 1 (372 aa).

The N-domain stretch occupies residues 1–105 (MGVKGLNQLI…GELEKRLLRR (105 aa)). Residue Asp-34 participates in Mg(2+) binding. Residues Arg-47 and Arg-71 each coordinate DNA. Residues Asp-87, Glu-159, Glu-161, Asp-180, and Asp-182 each contribute to the Mg(2+) site. The segment at 123 to 254 (EVLKFEKRLV…ATAFKLIKEH (132 aa)) is I-domain. Position 159 (Glu-159) interacts with DNA. DNA-binding residues include Gly-232 and Asp-234. Residue Asp-234 coordinates Mg(2+). Residues 339–347 (VQGRLDGFF) form an interaction with PCNA region.

Belongs to the XPG/RAD2 endonuclease family. FEN1 subfamily. In terms of assembly, interacts with PCNA. Three molecules of RAD27 bind to one PCNA trimer with each molecule binding to one PCNA monomer. PCNA stimulates the nuclease activity without altering cleavage specificity. It depends on Mg(2+) as a cofactor. Post-translationally, phosphorylated. Phosphorylation upon DNA damage induces relocalization to the nuclear plasma.

It is found in the nucleus. Its subcellular location is the nucleolus. The protein resides in the nucleoplasm. It localises to the mitochondrion. Functionally, structure-specific nuclease with 5'-flap endonuclease and 5'-3' exonuclease activities involved in DNA replication and repair. During DNA replication, cleaves the 5'-overhanging flap structure that is generated by displacement synthesis when DNA polymerase encounters the 5'-end of a downstream Okazaki fragment. It enters the flap from the 5'-end and then tracks to cleave the flap base, leaving a nick for ligation. Also involved in the long patch base excision repair (LP-BER) pathway, by cleaving within the apurinic/apyrimidinic (AP) site-terminated flap. Acts as a genome stabilization factor that prevents flaps from equilibrating into structures that lead to duplications and deletions. Also possesses 5'-3' exonuclease activity on nicked or gapped double-stranded DNA, and exhibits RNase H activity. Also involved in replication and repair of rDNA and in repairing mitochondrial DNA. In Candida dubliniensis (strain CD36 / ATCC MYA-646 / CBS 7987 / NCPF 3949 / NRRL Y-17841) (Yeast), this protein is Flap endonuclease 1.